A 220-amino-acid chain; its full sequence is Elongation factor Ts, chloroplastic (220 aa).

It belongs to the EF-Ts family.

It is found in the plastid. The protein localises to the chloroplast. In terms of biological role, associates with the EF-Tu.GDP complex and induces the exchange of GDP to GTP. It remains bound to the aminoacyl-tRNA.EF-Tu.GTP complex up to the GTP hydrolysis stage on the ribosome. The chain is Elongation factor Ts, chloroplastic (tsf) from Porphyra purpurea (Red seaweed).